We begin with the raw amino-acid sequence, 459 residues long: Replication initiator protein (459 aa).

In terms of biological role, essential for pSAM2 replication. This is Replication initiator protein (repSA) from Streptomyces ambofaciens.